We begin with the raw amino-acid sequence, 398 residues long: tRNA-specific 2-thiouridylase MnmA (398 aa).

ATP-binding positions include A18–S25 and L44. The active-site Nucleophile is C112. C112 and C213 are oxidised to a cystine. Residue G136 coordinates ATP. Positions R163–Q165 are interaction with tRNA. C213 acts as the Cysteine persulfide intermediate in catalysis.

Belongs to the MnmA/TRMU family.

The protein resides in the cytoplasm. It carries out the reaction S-sulfanyl-L-cysteinyl-[protein] + uridine(34) in tRNA + AH2 + ATP = 2-thiouridine(34) in tRNA + L-cysteinyl-[protein] + A + AMP + diphosphate + H(+). Functionally, catalyzes the 2-thiolation of uridine at the wobble position (U34) of tRNA, leading to the formation of s(2)U34. This is tRNA-specific 2-thiouridylase MnmA from Sinorhizobium medicae (strain WSM419) (Ensifer medicae).